Here is a 242-residue protein sequence, read N- to C-terminus: Ribonuclease 3 (242 aa).

Residues 18 to 146 (APAIEAKLGY…IIGAIYLDGG (129 aa)) enclose the RNase III domain. Glutamate 59 contributes to the Mg(2+) binding site. The active site involves aspartate 63. Mg(2+)-binding residues include aspartate 132 and glutamate 135. Glutamate 135 is a catalytic residue. In terms of domain architecture, DRBM spans 172–241 (NWKALLQDYC…AADALSRVEL (70 aa)). Residues 218–227 (RGKGTSKKEA) show a composition bias toward basic and acidic residues. A disordered region spans residues 218-242 (RGKGTSKKEAQQAAAADALSRVELP).

Belongs to the ribonuclease III family. As to quaternary structure, homodimer. The cofactor is Mg(2+).

The protein localises to the cytoplasm. The enzyme catalyses Endonucleolytic cleavage to 5'-phosphomonoester.. Its function is as follows. Digests double-stranded RNA. Involved in the processing of primary rRNA transcript to yield the immediate precursors to the large and small rRNAs (23S and 16S). Processes some mRNAs, and tRNAs when they are encoded in the rRNA operon. Processes pre-crRNA and tracrRNA of type II CRISPR loci if present in the organism. This Protochlamydia amoebophila (strain UWE25) protein is Ribonuclease 3.